The primary structure comprises 366 residues: Mitogen-activated protein kinase 13 (366 aa).

One can recognise a Protein kinase domain in the interval 25–308 (YLAPAHVGSG…AAQALAHPFF (284 aa)). ATP-binding positions include 31–39 (VGSGAYGAV) and lysine 54. Aspartate 150 acts as the Proton acceptor in catalysis. Threonine 180 carries the post-translational modification Phosphothreonine; by MAP2K3, MAP2K4, MAP2K6 and MAP2K7. The TXY signature appears at 180-182 (TGY). A Phosphotyrosine modification is found at tyrosine 182. The residue at position 350 (serine 350) is a Phosphoserine.

Belongs to the protein kinase superfamily. CMGC Ser/Thr protein kinase family. MAP kinase subfamily. As to quaternary structure, interacts with MAPK8IP2. Requires Mg(2+) as cofactor. In terms of processing, dually phosphorylated on Thr-180 and Tyr-182 by MAP2K3/MKK3, MAP2K4/MKK4, MAP2K6/MKK6 and MAP2K7/MKK7, which activates the enzyme. Dephosphorylated by dual specificity phosphatase DUSP1.

The catalysed reaction is L-seryl-[protein] + ATP = O-phospho-L-seryl-[protein] + ADP + H(+). It carries out the reaction L-threonyl-[protein] + ATP = O-phospho-L-threonyl-[protein] + ADP + H(+). With respect to regulation, activated by phosphorylation on threonine and tyrosine by dual specificity kinases, MAP2K3/MKK3, MAP2K6/MKK6, MAP2K4/MKK4 and MAP2K7/MKK7. Activation by ultraviolet radiation, hyperosmotic shock, anisomycin or by TNF-alpha is mediated by MAP2K3/MKK3. Inhibited by dual specificity phosphatase DUSP1. Serine/threonine kinase which acts as an essential component of the MAP kinase signal transduction pathway. MAPK13 is one of the four p38 MAPKs which play an important role in the cascades of cellular responses evoked by extracellular stimuli such as pro-inflammatory cytokines or physical stress leading to direct activation of transcription factors such as ELK1 and ATF2. Accordingly, p38 MAPKs phosphorylate a broad range of proteins and it has been estimated that they may have approximately 200 to 300 substrates each. MAPK13 is one of the less studied p38 MAPK isoforms. Some of the targets are downstream kinases such as MAPKAPK2, which are activated through phosphorylation and further phosphorylate additional targets. Plays a role in the regulation of protein translation by phosphorylating and inactivating EEF2K. Involved in cytoskeletal remodeling through phosphorylation of MAPT and STMN1. Mediates UV irradiation induced up-regulation of the gene expression of CXCL14. Plays an important role in the regulation of epidermal keratinocyte differentiation, apoptosis and skin tumor development. Phosphorylates the transcriptional activator MYB in response to stress which leads to rapid MYB degradation via a proteasome-dependent pathway. MAPK13 also phosphorylates and down-regulates PRKD1 during regulation of insulin secretion in pancreatic beta cells. The protein is Mitogen-activated protein kinase 13 (Mapk13) of Mus musculus (Mouse).